Here is a 276-residue protein sequence, read N- to C-terminus: Diacetylchitobiose uptake system permease protein DasC (276 aa).

Helical transmembrane passes span 14 to 34 (TAVV…ATAF), 74 to 94 (LIVT…GSFA), 105 to 125 (GFIV…VIAI), 137 to 157 (SLVP…ILTL), 186 to 206 (VILP…FITA), and 241 to 261 (GATM…FVYL). In terms of domain architecture, ABC transmembrane type-1 spans 70 to 261 (VSNSLIVTVC…IPILILFVYL (192 aa)).

Belongs to the binding-protein-dependent transport system permease family. In terms of assembly, the complex is composed of two ATP-binding proteins (MsiK), two transmembrane proteins (DasB and DasC) and a solute-binding protein (DasA).

It localises to the cell membrane. Its function is as follows. Part of the ABC transporter complex DasABC-MsiK involved in N,N'-diacetylchitobiose ((GlcNAc)2) uptake. Responsible for the translocation of the substrate across the membrane. The chain is Diacetylchitobiose uptake system permease protein DasC from Streptomyces coelicolor (strain ATCC BAA-471 / A3(2) / M145).